Consider the following 206-residue polypeptide: Protein GET1 (206 aa).

At 1-4 the chain is on the lumenal side; that stretch reads MPSL. A helical transmembrane segment spans residues 5–24; sequence LITVLFLNVIIYVINTVGAA. Residues 25 to 110 lie on the Cytoplasmic side of the membrane; sequence TVDGLLWLLY…TFDMTIKIAR (86 aa). A coiled-coil region spans residues 75-100; that stretch reads AKLRRRHDKAMEAYEAKNNELTQSKS. Residues 111 to 131 traverse the membrane as a helical segment; it reads WAATSGLMLFLQFWYSKTPIF. At 132–155 the chain is on the lumenal side; it reads TLPPGWIPWQVQWVLSFPRAPMGT. The helical transmembrane segment at 156–172 threads the bilayer; it reads VSIQIWGGACATVVALV. Residues 173–206 lie on the Cytoplasmic side of the membrane; the sequence is GDAMRASLAYVSKPKIDRIKLGATMEGKEGKKRQ.

It belongs to the WRB/GET1 family. As to quaternary structure, interacts with GET3.

The protein localises to the endoplasmic reticulum membrane. Its function is as follows. Required for the post-translational delivery of tail-anchored (TA) proteins to the endoplasmic reticulum. Acts as a membrane receptor for soluble GET3, which recognizes and selectively binds the transmembrane domain of TA proteins in the cytosol. This is Protein GET1 from Ajellomyces capsulatus (strain NAm1 / WU24) (Darling's disease fungus).